The primary structure comprises 199 residues: Imidazoleglycerol-phosphate dehydratase (199 aa).

It belongs to the imidazoleglycerol-phosphate dehydratase family.

The protein localises to the cytoplasm. The catalysed reaction is D-erythro-1-(imidazol-4-yl)glycerol 3-phosphate = 3-(imidazol-4-yl)-2-oxopropyl phosphate + H2O. Its pathway is amino-acid biosynthesis; L-histidine biosynthesis; L-histidine from 5-phospho-alpha-D-ribose 1-diphosphate: step 6/9. This chain is Imidazoleglycerol-phosphate dehydratase, found in Methylibium petroleiphilum (strain ATCC BAA-1232 / LMG 22953 / PM1).